Consider the following 827-residue polypeptide: Zinc phosphodiesterase ELAC protein 2 (827 aa).

The N-terminal 16 residues, 1-16 (MWALRSLLRPLGLRTM), are a transit peptide targeting the mitochondrion. Disordered regions lie at residues 15-46 (TMSQGSARRPRPPKDPLRHLRTREKRGPGWGP) and 181-220 (SERRCGEQEPSRSPKRSPNRLSPKQSSSDPGSAENGQCLP). Positions 181-192 (SERRCGEQEPSR) are enriched in basic and acidic residues. Phosphoserine is present on residues S193, S197, S202, S207, S617, and S735. The span at 199–210 (NRLSPKQSSSDP) shows a compositional bias: polar residues. Residues 794 to 827 (LTQQADSSEDREPHQKRAHSEEPHSPQSKKVRAQ) are disordered. Phosphothreonine is present on T795. S800 carries the post-translational modification Phosphoserine. Positions 801–817 (SEDREPHQKRAHSEEPH) are enriched in basic and acidic residues. S818 carries the phosphoserine modification.

The protein belongs to the RNase Z family. In terms of assembly, homodimer. Interacts with PTCD1. The cofactor is Zn(2+).

It is found in the mitochondrion. The protein resides in the mitochondrion matrix. The protein localises to the mitochondrion nucleoid. It localises to the nucleus. The catalysed reaction is Endonucleolytic cleavage of RNA, removing extra 3' nucleotides from tRNA precursor, generating 3' termini of tRNAs. A 3'-hydroxy group is left at the tRNA terminus and a 5'-phosphoryl group is left at the trailer molecule.. Its function is as follows. Zinc phosphodiesterase, which displays mitochondrial tRNA 3'-processing endonuclease activity. Involved in tRNA maturation, by removing a 3'-trailer from precursor tRNA. Associates with mitochondrial DNA complexes at the nucleoids to initiate RNA processing and ribosome assembly. In Rattus norvegicus (Rat), this protein is Zinc phosphodiesterase ELAC protein 2 (Elac2).